Reading from the N-terminus, the 1305-residue chain is MDSLQRLNGLLTLVLSALWHLGLTASNYNCDDPLASFFSPMTFSSSLDLTGSYSSAQLNWKMGTGGWSPVDSNAQQWLQIDLGNRVEITAVATQGRYGSSDWVTSYRLMFSDTGHNWQHYTQEDSIWTFVGNMNADSVVHHRLLHSMRARFVRFVPLEWNPNGKIGMRVEAYGCSYRSDVADFDGRSTLLYRFNQKTMSTLKDVISLKFKSMQGDGVLFHGEGQRGDHVTLELQKGRLALYLNLDDSKARLSSTVPLVIMGSLLDDQHWHSVLLERVGKQANFTVDMNTQHFQTKGETDALDIDYELSFGGIPVPSKPGTFVKKNFHGCMENLYYNGVNIIDLAKRRKHQIYSGNVTFSCSEPQIVPITFVNSRSSYLMLPGTPQIDGLSVSFQFRTWNEDGLLLSTELSEGSGTLLLILEGGTLRLLIKKVAGHGTEIKTGSGLNDGLWHSVSINARRNRVTLTLDNDAASPAPETSRKQIYSGKSYYFGGCPDNLTDSQCLNPIKAFQGCMRLIFIDNQPKDLISVQQGSLGNFSDLHIDLCSIKDRCLPNYCEHGGHCAQTWTTFYCNCSDTGYTGATCHDSIYEQSCEVYRHKGHTAGFFYVDSDGSGPLGPLQVYCNITEDKIWMTVQHNNTELTRVQGSSPEKPYSMTLNYGGSMEQLEALIDGSEYCEQELKYHCRRSRLLNTLDGTPFTWWIGRSNERHPYWEGSVPGVQQCGCGLEESCLDNAYFCNCDADMDEWSNNTGLFSLKDHLPVTHVIITDTNRSNSEAAWRIGPLRCNGDRHFWNAVSFSTEASYLHFPTFHAEFSADISFFFKTTALSGVFLENLGIKDFLRLEMSSPSEVTFTIDVGNGPVELLVQSPYPLNDNQWHYIRAERNVKETSLQVDNLPLSLREASEEAYFRLHLTSQLFVGGTSSRQKGFLGCMRSLHLNGQNTDLIERAKLMSGVTPGCPGHCSSYSSNCHNGGKCVEKQSGYSCDCTNSPNEGPFCQKEISALFDPGTSVTYMFQEPYLVIKNTSLLSSPIYTDTARSKETIMLNFLTAQAPTILLYLNFSSQKFLAILLSSNGSLQIRFRLSKGESHVYTMSTENLANGRVHQVKISKDGPEISIQMDQQLFSYNFSTKVEFWTLKSLVLGKVTETLGLDPEVAKVNILGFLGCLSSVQYNHIAPLKAALRHAGVAPVTVHGTLTESGCDSTLDSDVNAVTTVHSSLEPIGKRDEQEPLTNTVQSDSAVIGGIIAVVTFVTFCVIGIMICFLYQHKQSHRTNQTKEKEYPETLSNSFRNVIDLQNTASECKREYFI.

An N-terminal signal peptide occupies residues Met-1–Thr-24. Residues Ala-25 to Cys-174 form the F5/8 type C domain. Laminin G-like domains lie at Val-180 to Cys-360 and Pro-367 to Cys-544. N-linked (GlcNAc...) asparagine glycosylation occurs at Asn-282. Cys-329 and Cys-360 are disulfide-bonded. N-linked (GlcNAc...) asparagine glycosylation is present at Asn-496. Intrachain disulfides connect Cys-512–Cys-544, Cys-550–Cys-561, and Cys-555–Cys-570. The EGF-like 1 domain maps to Ile-546–His-583. N-linked (GlcNAc...) asparagine glycosylation occurs at Asn-571. An intrachain disulfide couples Cys-572 to Cys-582. In terms of domain architecture, Fibrinogen C-terminal spans Asp-584 to Trp-790. Residue Asn-622 is glycosylated (N-linked (GlcNAc...) asparagine). A Laminin G-like 3 domain is found at Asn-791 to Cys-956. Cystine bridges form between Cys-929–Cys-956, Cys-960–Cys-973, Cys-967–Cys-982, and Cys-984–Cys-994. In terms of domain architecture, EGF-like 2 spans Pro-957 to Gln-995. In terms of domain architecture, Laminin G-like 4 spans Glu-1014 to Cys-1198. N-linked (GlcNAc...) asparagine glycosylation occurs at Asn-1057. Residues Cys-1163 and Cys-1198 are joined by a disulfide bond. A helical transmembrane segment spans residues Val-1238–Ile-1258.

The protein belongs to the neurexin family.

Its subcellular location is the membrane. Its function is as follows. May play a role in the correct development and proper functioning of the peripheral and central nervous system and be involved in cell adhesion and intercellular communication. In Rattus norvegicus (Rat), this protein is Contactin-associated protein like 5-1 (Cntnap5a).